Reading from the N-terminus, the 87-residue chain is Small ribosomal subunit protein uS15c (87 aa).

It belongs to the universal ribosomal protein uS15 family. As to quaternary structure, part of the 30S ribosomal subunit.

Its subcellular location is the plastid. The protein resides in the chloroplast. The protein is Small ribosomal subunit protein uS15c (rps15) of Coffea arabica (Arabian coffee).